The following is a 126-amino-acid chain: Protein Wnt-7(II) (126 aa).

A lipid anchor (O-palmitoleoyl serine; by PORCN) is attached at serine 1. Cysteine 92 and cysteine 107 are oxidised to a cystine. Asparagine 93 is a glycosylation site (N-linked (GlcNAc...) asparagine).

Belongs to the Wnt family. In terms of processing, palmitoleoylation is required for efficient binding to frizzled receptors. Depalmitoleoylation leads to Wnt signaling pathway inhibition.

Its subcellular location is the secreted. It localises to the extracellular space. The protein localises to the extracellular matrix. Ligand for members of the frizzled family of seven transmembrane receptors. Probable developmental protein. May be a signaling molecule which affects the development of discrete regions of tissues. Is likely to signal over only few cell diameters. This is Protein Wnt-7(II) (WNT-7(II)) from Eptatretus stoutii (Pacific hagfish).